The sequence spans 88 residues: Sec-independent protein translocase protein TatA (88 aa).

A helical transmembrane segment spans residues 1–21; it reads MGSLSPWHWAILAVVVIVLFG. Over residues 43-52 the composition is skewed to basic and acidic residues; it reads MREMQSETKA. Positions 43–88 are disordered; it reads MREMQSETKAEPSAIETNTANPTPVQSQRIDPAAATGQDQTEARPA. A compositionally biased stretch (polar residues) spans 57-71; that stretch reads IETNTANPTPVQSQR.

This sequence belongs to the TatA/E family. In terms of assembly, the Tat system comprises two distinct complexes: a TatABC complex, containing multiple copies of TatA, TatB and TatC subunits, and a separate TatA complex, containing only TatA subunits. Substrates initially bind to the TatABC complex, which probably triggers association of the separate TatA complex to form the active translocon.

Its subcellular location is the cell membrane. Part of the twin-arginine translocation (Tat) system that transports large folded proteins containing a characteristic twin-arginine motif in their signal peptide across membranes. TatA could form the protein-conducting channel of the Tat system. The polypeptide is Sec-independent protein translocase protein TatA (Mycobacterium marinum (strain ATCC BAA-535 / M)).